We begin with the raw amino-acid sequence, 210 residues long: LexA repressor (210 aa).

Residues 30–50 (RVEIAREIGFKSPNAAEEHLK) constitute a DNA-binding region (H-T-H motif). Catalysis depends on for autocatalytic cleavage activity residues Ser-127 and Lys-164.

The protein belongs to the peptidase S24 family. In terms of assembly, homodimer.

The enzyme catalyses Hydrolysis of Ala-|-Gly bond in repressor LexA.. Functionally, represses a number of genes involved in the response to DNA damage (SOS response), including recA and lexA. In the presence of single-stranded DNA, RecA interacts with LexA causing an autocatalytic cleavage which disrupts the DNA-binding part of LexA, leading to derepression of the SOS regulon and eventually DNA repair. The chain is LexA repressor from Actinobacillus pleuropneumoniae serotype 5b (strain L20).